Here is a 162-residue protein sequence, read N- to C-terminus: Ribosomal RNA large subunit methyltransferase H (162 aa).

S-adenosyl-L-methionine is bound by residues Leu78, Gly109, and 128 to 133; that span reads LSPLTL.

Belongs to the RNA methyltransferase RlmH family. As to quaternary structure, homodimer.

It is found in the cytoplasm. The catalysed reaction is pseudouridine(1915) in 23S rRNA + S-adenosyl-L-methionine = N(3)-methylpseudouridine(1915) in 23S rRNA + S-adenosyl-L-homocysteine + H(+). Specifically methylates the pseudouridine at position 1915 (m3Psi1915) in 23S rRNA. The sequence is that of Ribosomal RNA large subunit methyltransferase H from Psychrobacter sp. (strain PRwf-1).